The primary structure comprises 623 residues: Protein FAM234B (623 aa).

The segment at 1 to 82 is disordered; that stretch reads MATVLSRALK…TSERAPEGYP (82 aa). The chain crosses the membrane as a helical span at residues 104-124; sequence AVFLLTVVISMILVLVCAFLI.

It belongs to the FAM234 family.

Its subcellular location is the membrane. It localises to the golgi outpost. The protein resides in the cytoplasm. It is found in the cytoskeleton. The protein localises to the microtubule organizing center. The protein is Protein FAM234B (FAM234B) of Gallus gallus (Chicken).